The sequence spans 589 residues: Progranulin (589 aa).

Positions 1–17 (MWVLMSWLAFAAGLVAG) are cleaved as a signal peptide. Asparagine 38 carries N-linked (GlcNAc...) asparagine glycosylation. Cystine bridges form between cysteine 125–cysteine 138 and cysteine 132–cysteine 148. An N-linked (GlcNAc...) asparagine glycan is attached at asparagine 263. Disulfide bonds link cysteine 282/cysteine 294, cysteine 288/cysteine 304, cysteine 295/cysteine 312, cysteine 305/cysteine 319, cysteine 313/cysteine 326, cysteine 320/cysteine 333, cysteine 364/cysteine 376, cysteine 370/cysteine 386, cysteine 395/cysteine 408, and cysteine 402/cysteine 414. Residue asparagine 373 is glycosylated (N-linked (GlcNAc...) asparagine). The N-linked (GlcNAc...) asparagine glycan is linked to asparagine 526.

Belongs to the granulin family. Progranulin is secreted as a homodimer. Interacts with SLPI; interaction protects progranulin from proteolysis. Interacts (via region corresponding to granulin-7 peptide) with CTSD; stabilizes CTSD and increases its proteolytic activity. Interacts (via region corresponding to granulin-7 peptide) with SORT1; this interaction mediates endocytosis and lysosome delivery of progranulin; interaction occurs at the neuronal cell surface in a stressed nervous system. Interacts with PSAP; facilitates lysosomal delivery of progranulin from the extracellular space and the biosynthetic pathway. Forms a complex with PSAP and M6PR; PSAP bridges the binding between progranulin and M6PR. Forms a complex with PSAP and SORT1; progranulin bridges the interaction between PSAP and SORT1; facilitates lysosomal targeting of PSAP via SORT1; interaction enhances PSAP uptake in primary cortical neurons. Interacts (via regions corresponding to granulin-2 and granulin-7 peptides) with GBA1; this interaction prevents aggregation of GBA1-SCARB2 complex via interaction with HSPA1A upon stress. Interacts (via region corresponding to granulin-7 peptide) with HSPA1A; mediates recruitment of HSPA1A to GBA1 and prevents GBA1 aggregation in response to stress. In terms of processing, N-glycosylated. Cleaved by ELANE; proteolysis is blocked by SLPI and is concentration- and time-dependent and induces CXCL8/IL-8 production; granulin-3 and granulin-4 are resistant to ELANE. Cleaved by CTSL in lysosome thus regulating the maturation and turnover of progranulin within the lysosome. As to expression, highly expressed at the wound site and diminishes away from the wound. Not expressed in fibroblasts and endothelial cells in intact skin. In adult brain, expressed primarily in neurons and in resting and reactive microglia. Expressed in both neurons and microglia. Highly expressed in activated microglia in response to injury. Expressed in macrophage.

The protein localises to the secreted. It is found in the lysosome. Its function is as follows. Secreted protein that acts as a key regulator of lysosomal function and as a growth factor involved in inflammation, wound healing and cell proliferation. Regulates protein trafficking to lysosomes, and also the activity of lysosomal enzymes. Also facilitates the acidification of lysosomes, causing degradation of mature CTSD by CTSB. In addition, functions as a wound-related growth factor that acts directly on dermal fibroblasts and endothelial cells to promote division, migration and the formation of capillary-like tubule structures. Also promotes epithelial cell proliferation by blocking TNF-mediated neutrophil activation preventing release of oxidants and proteases. Moreover, modulates inflammation in neurons by preserving neurons survival, axonal outgrowth and neuronal integrity. Inhibits epithelial cell proliferation and induces epithelial cells to secrete IL-8. Functionally, stabilizes CTSD through interaction with CTSD leading to maintain its aspartic-type peptidase activity. The protein is Progranulin (Grn) of Mus musculus (Mouse).